The following is a 173-amino-acid chain: MGSPCHFALFELKPEFQLDLDQLATRYRELARNVHPDRFADAPEREQRLALERSASLNEAYQTLKSPPKRARYLLAMNGNEVPLEVTVHDPEFLLQQMQLREDLEDLQDEADLAGVATFKRQLKVAQDELNQSFAACWNDAAQREHAEKLMRRMQFLDKLSHEVRQLEERLDD.

The region spanning 5-77 (CHFALFELKP…PKRARYLLAM (73 aa)) is the J domain.

This sequence belongs to the HscB family. In terms of assembly, interacts with HscA and stimulates its ATPase activity.

Functionally, co-chaperone involved in the maturation of iron-sulfur cluster-containing proteins. Seems to help targeting proteins to be folded toward HscA. This Pseudomonas syringae pv. tomato (strain ATCC BAA-871 / DC3000) protein is Co-chaperone protein HscB homolog.